The chain runs to 72 residues: Translation initiation factor IF-1 (72 aa).

In terms of domain architecture, S1-like spans 1–72; that stretch reads MSKQSSIEQD…TKGRIVFRYK (72 aa).

This sequence belongs to the IF-1 family. In terms of assembly, component of the 30S ribosomal translation pre-initiation complex which assembles on the 30S ribosome in the order IF-2 and IF-3, IF-1 and N-formylmethionyl-tRNA(fMet); mRNA recruitment can occur at any time during PIC assembly.

Its subcellular location is the cytoplasm. In terms of biological role, one of the essential components for the initiation of protein synthesis. Stabilizes the binding of IF-2 and IF-3 on the 30S subunit to which N-formylmethionyl-tRNA(fMet) subsequently binds. Helps modulate mRNA selection, yielding the 30S pre-initiation complex (PIC). Upon addition of the 50S ribosomal subunit IF-1, IF-2 and IF-3 are released leaving the mature 70S translation initiation complex. This is Translation initiation factor IF-1 from Cytophaga hutchinsonii (strain ATCC 33406 / DSM 1761 / CIP 103989 / NBRC 15051 / NCIMB 9469 / D465).